The primary structure comprises 735 residues: Two pore calcium channel protein 1B (735 aa).

Residues 1–76 (MEEYLLPGES…ELYFMFTRFD (76 aa)) are Cytoplasmic-facing. A helical membrane pass occupies residues 77 to 97 (FLWSLNYLALVVLNFFEKPLW). Over 98–125 (CSKHLAESCNNRDYYYLGELPFLTGAES) the chain is Extracellular. The helical transmembrane segment at 126–146 (LIFEGVTLLLLIIHILFPISY) threads the bilayer. Residues 147–161 (EGFNLYWRSLLNRLK) lie on the Cytoplasmic side of the membrane. The chain crosses the membrane as a helical span at residues 162–182 (VILLLILVADIVVYILLPADF). Residue tyrosine 183 is a topological domain, extracellular. The helical; Voltage-sensor transmembrane segment at 184 to 202 (YLPFRIAPYLRVVFFILNI) threads the bilayer. Over 203–208 (RELRDS) the chain is Cytoplasmic. A helical membrane pass occupies residues 209 to 229 (FFILAGMLGTYLNVVALSALF). Over 230 to 248 (LLFSSWLAYVFFEDTRQGK) the chain is Extracellular. Positions 249–263 (TTFTSYGTTLYQMFV) form an intramembrane region, pore-forming. Topologically, residues 264 to 286 (LFTTSNNPDVWIPAYKDSRWYCL) are extracellular. A helical transmembrane segment spans residues 287 to 307 (FFVLYVLLGVYFVTNLILAVV). At 308–431 (YDSFKSELVK…ASEKLRGFIR (124 aa)) the chain is on the cytoplasmic side. 2 EF-hand domains span residues 325–360 (LRLR…LNKY) and 366–401 (ISGD…IGLR). Residues 432 to 452 (GATFEYIIVFVLLVNLVAVII) traverse the membrane as a helical segment. The Extracellular segment spans residues 453 to 470 (ETTLDIQNNSGQTFWQKV). The N-linked (GlcNAc...) asparagine glycan is linked to asparagine 460. The chain crosses the membrane as a helical span at residues 471–491 (EFTFGWLYVIEMALKVYTYGF). Topologically, residues 492–501 (ENYWRDGQNR) are cytoplasmic. The helical transmembrane segment at 502–522 (FDFIVTWVIVIGETTTFVAPD) threads the bilayer. The Extracellular portion of the chain corresponds to 523–531 (DLTFLSNGE). The helical; Voltage-sensor transmembrane segment at 532 to 549 (WIRYLLIARMLRLIRLLM) threads the bilayer. At 550–560 (HVERYRAFVAT) the chain is on the cytoplasmic side. The chain crosses the membrane as a helical span at residues 561–581 (FLTLIPSLMPYLGTIFCILCF). At 582–618 (YCSLGLQIFGGIVNTGNPNLAQTDLAGNDYLLFNFND) the chain is on the extracellular side. The pore-forming intramembrane region spans 619-633 (YPNGMVTLFNILVMG). Residues 634-654 (NWQVWMQSYKELTGTSWTYAY) lie on the Extracellular side of the membrane. Residues 655–675 (FVSFYLISVLWLLNLIVAFVL) form a helical membrane-spanning segment. Topologically, residues 676-735 (EAFQAEMDLEASARCVDGDDKEAKRERRRNVGTKTRSQRVDFLLHHMLRSELTECSNDNP) are cytoplasmic.

It belongs to the calcium channel alpha-1 subunit (TC 1.A.1.11) family. Two pore calcium channel subfamily. Homodimer.

Its subcellular location is the membrane. With respect to regulation, inhibited by Al(3+), La(3+) and Gd(3+). Up-regulated by H(2)O(2), cryptogein, salicylic acid (SA) and cold shock. Functions as a voltage-gated inward-rectifying Ca(2+) channel (VDCC) across the plasma membrane that mediates sucrose-induced Ca(2+) influx in autotrophically grown leaf cells. Acts as the major ROS-responsive Ca(2+) channel and is the possible target of Al-dependent inhibition. Plays a regulatory role in defense responses. The polypeptide is Two pore calcium channel protein 1B (TPC1B) (Nicotiana tabacum (Common tobacco)).